The following is a 64-amino-acid chain: Large ribosomal subunit protein bL35 (64 aa).

Residues 1 to 26 (MPKMKTKSAAAKRFKTTKSGKIKRKQ) show a composition bias toward basic residues. Residues 1 to 46 (MPKMKTKSAAAKRFKTTKSGKIKRKQAYTSHLAPNKTTKQKRHLRK) are disordered.

The protein belongs to the bacterial ribosomal protein bL35 family.

In Mycoplasmoides gallisepticum (strain R(low / passage 15 / clone 2)) (Mycoplasma gallisepticum), this protein is Large ribosomal subunit protein bL35.